The following is a 304-amino-acid chain: Porphobilinogen deaminase (304 aa).

The residue at position 240 (C240) is an S-(dipyrrolylmethanemethyl)cysteine.

This sequence belongs to the HMBS family. As to quaternary structure, monomer. Dipyrromethane serves as cofactor.

It catalyses the reaction 4 porphobilinogen + H2O = hydroxymethylbilane + 4 NH4(+). It functions in the pathway porphyrin-containing compound metabolism; protoporphyrin-IX biosynthesis; coproporphyrinogen-III from 5-aminolevulinate: step 2/4. Its function is as follows. Tetrapolymerization of the monopyrrole PBG into the hydroxymethylbilane pre-uroporphyrinogen in several discrete steps. This is Porphobilinogen deaminase from Xanthomonas campestris pv. campestris (strain B100).